The primary structure comprises 216 residues: 7-carboxy-7-deazaguanine synthase (216 aa).

Residues 12 to 14 and Arg-27 contribute to the substrate site; that span reads LQG. The 199-residue stretch at 18 to 216 folds into the Radical SAM core domain; it reads RAGRAAVFCR…LQTHKYLGIP (199 aa). The [4Fe-4S] cluster site is built by Cys-31, Cys-46, and Cys-49. A Mg(2+)-binding site is contributed by Thr-51. Position 93 (Thr-93) interacts with substrate. S-adenosyl-L-methionine-binding positions include Gly-95, 136–138, and 176–179; these read SPK and QPRD. Pro-216 provides a ligand contact to substrate.

Belongs to the radical SAM superfamily. 7-carboxy-7-deazaguanine synthase family. In terms of assembly, homodimer. Requires [4Fe-4S] cluster as cofactor. S-adenosyl-L-methionine serves as cofactor. The cofactor is Mg(2+).

It catalyses the reaction 6-carboxy-5,6,7,8-tetrahydropterin + H(+) = 7-carboxy-7-deazaguanine + NH4(+). It functions in the pathway purine metabolism; 7-cyano-7-deazaguanine biosynthesis. In terms of biological role, catalyzes the complex heterocyclic radical-mediated conversion of 6-carboxy-5,6,7,8-tetrahydropterin (CPH4) to 7-carboxy-7-deazaguanine (CDG), a step common to the biosynthetic pathways of all 7-deazapurine-containing compounds. This is 7-carboxy-7-deazaguanine synthase from Nitratidesulfovibrio vulgaris (strain ATCC 29579 / DSM 644 / CCUG 34227 / NCIMB 8303 / VKM B-1760 / Hildenborough) (Desulfovibrio vulgaris).